The chain runs to 426 residues: Gamma-glutamylputrescine oxidoreductase (426 aa).

The protein belongs to the gamma-glutamylputrescine oxidoreductase family.

It carries out the reaction gamma-L-glutamylputrescine + O2 + H2O = 4-(gamma-L-glutamylamino)butanal + H2O2 + NH4(+). Its pathway is amine and polyamine degradation; putrescine degradation; 4-aminobutanoate from putrescine: step 2/4. Its function is as follows. Involved in the breakdown of putrescine via the oxidation of L-glutamylputrescine. This is Gamma-glutamylputrescine oxidoreductase (puuB) from Escherichia coli (strain K12).